A 102-amino-acid polypeptide reads, in one-letter code: Small ribosomal subunit protein uS10 (102 aa).

The protein belongs to the universal ribosomal protein uS10 family. As to quaternary structure, part of the 30S ribosomal subunit.

Functionally, involved in the binding of tRNA to the ribosomes. This is Small ribosomal subunit protein uS10 from Exiguobacterium sibiricum (strain DSM 17290 / CCUG 55495 / CIP 109462 / JCM 13490 / 255-15).